Reading from the N-terminus, the 723-residue chain is ADP-ribosylation factor-binding protein GGA3 (723 aa).

The segment at 1–313 (MAEAEGESLE…GEVATLTLPD (313 aa)) is binds to ARF1 (in long isoform). The 131-residue stretch at 16 to 146 (ATNPSNRQED…MLKRQGIVQS (131 aa)) folds into the VHS domain. Residues Ser159 and Ser275 each carry the phosphoserine modification. The region spanning 171–298 (DEEKSKLLAK…VINSYKTIIE (128 aa)) is the GAT domain. Positions 299–593 (GQVINGEVAT…IHVPLESIKP (295 aa)) are unstructured hinge. The disordered stretch occupies residues 339-384 (SSVLAPAPTPPSSGIPILPPPPQASGPPRSRSSSQAEATLGPSSTS). Positions 345-363 (APTPPSSGIPILPPPPQAS) are enriched in pro residues. The segment covering 364–374 (GPPRSRSSSQA) has biased composition (low complexity). The short motif at 391 to 395 (DEELL) is the DXXLL element. Positions 428-464 (DFFSPRPGTAACGASDAPLLQPSAPSSSSSQAPLPPP) are disordered. The span at 441-459 (ASDAPLLQPSAPSSSSSQA) shows a compositional bias: low complexity. Residues 594–715 (SSALPVTAYD…TEVGEVDQFP (122 aa)) enclose the GAE domain.

This sequence belongs to the GGA protein family. Monomer. Interacts with GGA1 and GGA2. Binds to clathrin and activated ARFs, such as ARF1, ARF5 and ARF6. Binds RABEP1 and RABGEF1. Interacts with the membrane proteins M6PR/CD-MPR and IGF2R/CI-MPR and the accessory proteins SYNRG, EPN4, NECAP1, NECAP2 and AFTPH/aftiphilin. Interacts with TSG101 and UBC. Interacts with ADRA2B. Interacts with NTRK1; the interaction is independent of NTRK1 activation and ubiquitination. Interacts (via VHS domain) with BACE1 (via DXXLL motif). In terms of processing, phosphorylated by CK2 and dephosphorylated by PP2A. Phosphorylation of GGA3 allows the internal DXXLL motif to bind the VHS domain and to inhibit the recognition of cargo signals. Post-translationally, ubiquitinated. Proteolytically cleaved during apoptosis by CASP3. In terms of tissue distribution, ubiquitously expressed.

It localises to the golgi apparatus. It is found in the trans-Golgi network membrane. The protein localises to the endosome membrane. Its subcellular location is the early endosome membrane. The protein resides in the recycling endosome membrane. Functionally, plays a role in protein sorting and trafficking between the trans-Golgi network (TGN) and endosomes. Mediates the ARF-dependent recruitment of clathrin to the TGN and binds ubiquitinated proteins and membrane cargo molecules with a cytosolic acidic cluster-dileucine (DXXLL) motif. Mediates export of the GPCR receptor ADRA2B to the cell surface. nvolved in BACE1 transport and sorting as well as regulation of BACE1 protein levels. Regulates retrograde transport of BACE1 from endosomes to the trans-Golgi network via interaction through the VHS motif and dependent of BACE1 phosphorylation. Modulates BACE1 protein levels independently of the interaction between VHS domain and DXXLL motif through recognition of ubiquitination. Key player in a novel DXXLL-mediated endosomal sorting machinery to the recycling pathway that targets NTRK1 to the plasma membrane. The polypeptide is ADP-ribosylation factor-binding protein GGA3 (Homo sapiens (Human)).